Consider the following 285-residue polypeptide: Bifunctional protein FolD (285 aa).

Residues 165–167 (GRS), serine 190, and isoleucine 231 contribute to the NADP(+) site.

The protein belongs to the tetrahydrofolate dehydrogenase/cyclohydrolase family. As to quaternary structure, homodimer.

The catalysed reaction is (6R)-5,10-methylene-5,6,7,8-tetrahydrofolate + NADP(+) = (6R)-5,10-methenyltetrahydrofolate + NADPH. It catalyses the reaction (6R)-5,10-methenyltetrahydrofolate + H2O = (6R)-10-formyltetrahydrofolate + H(+). It participates in one-carbon metabolism; tetrahydrofolate interconversion. In terms of biological role, catalyzes the oxidation of 5,10-methylenetetrahydrofolate to 5,10-methenyltetrahydrofolate and then the hydrolysis of 5,10-methenyltetrahydrofolate to 10-formyltetrahydrofolate. The chain is Bifunctional protein FolD from Magnetococcus marinus (strain ATCC BAA-1437 / JCM 17883 / MC-1).